We begin with the raw amino-acid sequence, 451 residues long: UPF0210 protein NMA1908 (451 aa).

The protein belongs to the UPF0210 family. As to quaternary structure, homodimer.

The polypeptide is UPF0210 protein NMA1908 (Neisseria meningitidis serogroup A / serotype 4A (strain DSM 15465 / Z2491)).